A 225-amino-acid chain; its full sequence is Phosphatidylserine decarboxylase proenzyme (225 aa).

The active-site Schiff-base intermediate with substrate; via pyruvic acid is the Ser195. The residue at position 195 (Ser195) is a Pyruvic acid (Ser); by autocatalysis.

It belongs to the phosphatidylserine decarboxylase family. PSD-A subfamily. In terms of assembly, heterodimer of a large membrane-associated beta subunit and a small pyruvoyl-containing alpha subunit. Pyruvate serves as cofactor. Is synthesized initially as an inactive proenzyme. Formation of the active enzyme involves a self-maturation process in which the active site pyruvoyl group is generated from an internal serine residue via an autocatalytic post-translational modification. Two non-identical subunits are generated from the proenzyme in this reaction, and the pyruvate is formed at the N-terminus of the alpha chain, which is derived from the carboxyl end of the proenzyme. The post-translation cleavage follows an unusual pathway, termed non-hydrolytic serinolysis, in which the side chain hydroxyl group of the serine supplies its oxygen atom to form the C-terminus of the beta chain, while the remainder of the serine residue undergoes an oxidative deamination to produce ammonia and the pyruvoyl prosthetic group on the alpha chain.

It is found in the cell membrane. It catalyses the reaction a 1,2-diacyl-sn-glycero-3-phospho-L-serine + H(+) = a 1,2-diacyl-sn-glycero-3-phosphoethanolamine + CO2. It participates in phospholipid metabolism; phosphatidylethanolamine biosynthesis; phosphatidylethanolamine from CDP-diacylglycerol: step 2/2. In terms of biological role, catalyzes the formation of phosphatidylethanolamine (PtdEtn) from phosphatidylserine (PtdSer). This is Phosphatidylserine decarboxylase proenzyme from Gluconobacter oxydans (strain 621H) (Gluconobacter suboxydans).